The primary structure comprises 579 residues: Type II methyltransferase M.BseCI (579 aa).

The protein belongs to the N(4)/N(6)-methyltransferase family.

The catalysed reaction is a 2'-deoxyadenosine in DNA + S-adenosyl-L-methionine = an N(6)-methyl-2'-deoxyadenosine in DNA + S-adenosyl-L-homocysteine + H(+). Functionally, a gamma subtype methylase, recognizes the double-stranded sequence 5'-ATCGAT-3', methylation on A-5 on both strands, and protects the DNA from cleavage by the BanIII endonuclease. This is Type II methyltransferase M.BseCI from Geobacillus stearothermophilus (Bacillus stearothermophilus).